A 525-amino-acid chain; its full sequence is Ent-kaurene oxidase (525 aa).

The chain crosses the membrane as a helical span at residues 31-51; it reads VHWLIYVAFGAWLCSYVIHVL. Cys-466 contacts heme.

It belongs to the cytochrome P450 family. It depends on heme as a cofactor.

The protein resides in the membrane. The enzyme catalyses ent-kaur-16-ene + 3 reduced [NADPH--hemoprotein reductase] + 3 O2 = ent-kaur-16-en-19-oate + 3 oxidized [NADPH--hemoprotein reductase] + 4 H2O + 4 H(+). Its pathway is plant hormone biosynthesis; gibberellin biosynthesis. Functionally, catalyzes three successive oxidations of the 4-methyl group of ent-kaurene giving kaurenoic acid, a key step in gibberellin (GA) biosynthesis. This Gibberella intermedia (Bulb rot disease fungus) protein is Ent-kaurene oxidase (CYP503A1).